The chain runs to 360 residues: DNA ADP-ribosyl glycohydrolase (360 aa).

Residues 1-155 (MLRFVRGNLL…VYEPVENPKA (155 aa)) form the Macro domain. Residues 8–9 (NL), 20–22 (TVN), 31–34 (VALQ), and T79 each bind ADP-D-ribose. Residue K80 is the Nucleophile of the active site. 117–121 (GAGNG) lines the ADP-D-ribose pocket. Positions 167 to 338 (LTPARAALLK…VALDALLKRG (172 aa)) are interaction with DarT.

The protein belongs to the DarG ADP-ribosyl glycohydrolase family. Interacts (via C-terminus) with cognate toxin DarT; this heterodimeric complex neutralizes the toxic effect of DarT by preventing ssDNA binding to DarT and consequently inactivating the toxin by direct protein-protein interactions.

It catalyses the reaction an N-(ADP-alpha-D-ribosyl)-thymidine in DNA + H2O = a thymidine in DNA + ADP-D-ribose. Antitoxin component of the hybrid type II/IV toxin-antitoxin (TA) system DarTG, which plays a crucial role in controlling bacterial growth and bacteriophage infection. De-ADP-ribosylates DNA modified on thymidine by its cognate toxin DarT, which neutralizes the activity of cognate toxin DarT. Upon expression in E.coli neutralizes the effect of cognate toxin DarT. Upon expression in M.tuberculosis neutralizes the toxic effects of endogenous DarT. The polypeptide is DNA ADP-ribosyl glycohydrolase (Thermus aquaticus (strain ATCC BAA-2747 / Y51MC23)).